A 377-amino-acid polypeptide reads, in one-letter code: Dihydroorotate dehydrogenase (quinone) (377 aa).

Residues 82–86 and Thr-106 contribute to the FMN site; that span reads AGFDK. Residue Lys-86 coordinates substrate. 131–135 contributes to the substrate binding site; the sequence is NRMGF. 2 residues coordinate FMN: Asn-159 and Asn-192. Asn-192 is a substrate binding site. The active-site Nucleophile is Ser-195. Asn-197 contributes to the substrate binding site. FMN contacts are provided by Lys-228 and Thr-256. 257–258 contributes to the substrate binding site; that stretch reads NT. FMN-binding positions include Gly-282, Gly-311, and 332 to 333; that span reads YT.

Belongs to the dihydroorotate dehydrogenase family. Type 2 subfamily. As to quaternary structure, monomer. Requires FMN as cofactor.

The protein localises to the cell membrane. It catalyses the reaction (S)-dihydroorotate + a quinone = orotate + a quinol. The protein operates within pyrimidine metabolism; UMP biosynthesis via de novo pathway; orotate from (S)-dihydroorotate (quinone route): step 1/1. In terms of biological role, catalyzes the conversion of dihydroorotate to orotate with quinone as electron acceptor. This Corynebacterium efficiens (strain DSM 44549 / YS-314 / AJ 12310 / JCM 11189 / NBRC 100395) protein is Dihydroorotate dehydrogenase (quinone).